The sequence spans 540 residues: NEDD8-activating enzyme E1 regulatory subunit AXR1 (540 aa).

The protein belongs to the ubiquitin-activating E1 family. ULA1 subfamily. Heterodimer of ECR1 and AXR1. The complex binds to RUB1/NEDD8 and RCE1. Expressed in shoot, root and floral meristems, in vascular tissues of cotyledons and mature leaves, and in the stele of the root. Expressed at higher levels on the lower side of an emerging root during germination and at higher levels on the underside of the apical hook.

It localises to the nucleus. The protein operates within protein modification; protein neddylation. In terms of biological role, regulatory subunit of the dimeric ECR1-AXR1 E1 enzyme. E1 activates RUB1/NEDD8 by first adenylating its C-terminal glycine residue with ATP, thereafter linking this residue to the side chain of the catalytic cysteine, yielding a RUB1-ECR1 thioester and free AMP. E1 finally transfers RUB1 to the catalytic cysteine of RCE1. Plays an important role in auxin response. Regulates the chromosomal localization of meiotic recombination by crossovers (COs) and subsequent synapsis, probably through the activation of a CRL4 complex. Required for E3-mediated protein degradation in response to auxin, jasmonic acid and cold stress. Required for the COP1-COP10-CSN-mediated repression of photomorphogenesis in the dark. May function redundantly with AXL1 in the RUB conjugating pathway. Seems not to be functionally equivalent to AXL1 in vivo. This is NEDD8-activating enzyme E1 regulatory subunit AXR1 from Arabidopsis thaliana (Mouse-ear cress).